The following is a 722-amino-acid chain: NCK-interacting protein with SH3 domain (722 aa).

In terms of domain architecture, SH3 spans 1 to 58; the sequence is MYRALYAFRSAEPNALAFAAGETFLVLERSSAHWWLAARARSGETGYVPPAYLRRLQG. 2 disordered regions span residues 101–122 and 149–286; these read KETL…SSTS and PSSE…ASDD. A compositionally biased stretch (low complexity) spans 110–121; the sequence is SASSVAVMTSST. S120 is subject to Phosphoserine. The segment covering 169-185 has biased composition (pro residues); that stretch reads QIPPQPRRAAPTTPPPP. Positions 175–192 match the Nuclear localization signal motif; it reads RRAAPTTPPPPVKRRDRE. Residue T181 is modified to Phosphothreonine. Over residues 206–240 the composition is skewed to low complexity; that stretch reads PSGGNSVSSGSSVSSTSLDTLYTSSSPSEPGSSCS. A Phosphoserine modification is found at S294.

As to quaternary structure, associates with the intermediate filaments, vimentin and desmin. Binds the first and third SH3 domains of NCK. Binds the proline-rich domains of N-WASP through its SH3 domain. Similarly, binds diaphanous protein homolog 1 (DRF1). Binds the SH3 domains of GRB2 through its proline-rich domains. Interacts with Helicobacter pylori toxin vacA. Isoform 4 interacts with FHOD1. Interacts with FASLG. Interacts with TMIGD2. In terms of tissue distribution, highest expression in heart, brain, skeletal muscle, kidney and liver. Lower levels in placenta, lung, small intestine and leukocytes. Weak expression in colon, thymus and spleen.

The protein resides in the nucleus. Functionally, has an important role in stress fiber formation induced by active diaphanous protein homolog 1 (DRF1). Induces microspike formation, in vivo. In vitro, stimulates N-WASP-induced ARP2/3 complex activation in the absence of CDC42. May play an important role in the maintenance of sarcomeres and/or in the assembly of myofibrils into sarcomeres. Implicated in regulation of actin polymerization and cell adhesion. Plays a role in angiogenesis. The sequence is that of NCK-interacting protein with SH3 domain (NCKIPSD) from Homo sapiens (Human).